The following is a 256-amino-acid chain: MENSYTVDGHRLQYSVPLSSMHETSQNSETYGLSKESPLVCMPLFETNTTSFDISSLFSFNPKPEPENTHRVMDDSIAAVVGENVLFGDKNKVSDHLTKEGGVKRGRKMPQKTGGFMGVRKRPWGRWSAEIRDRIGRCRHWLGTFDTAEEAARAYDAAARRLRGTKAKTNFVIPPLFPKEIAQAQEDNRMRQKQKKKKKKKVSVRKCVKVTSVAQLFDDANFINSSSIKGNVISSIDNLEKMGLELDLSLGLLSRK.

A DNA-binding region (AP2/ERF) is located at residues 115–172 (GFMGVRKRPWGRWSAEIRDRIGRCRHWLGTFDTAEEAARAYDAAARRLRGTKAKTNFV).

Belongs to the AP2/ERF transcription factor family. ERF subfamily.

The protein localises to the nucleus. Functionally, probably acts as a transcriptional activator. Binds to the GCC-box pathogenesis-related promoter element. May be involved in the regulation of gene expression by stress factors and by components of stress signal transduction pathways. The polypeptide is Ethylene-responsive transcription factor ERF084 (ERF084) (Arabidopsis thaliana (Mouse-ear cress)).